Reading from the N-terminus, the 210-residue chain is NAD(P)H-quinone oxidoreductase subunit I (210 aa).

4Fe-4S ferredoxin-type domains lie at 55–84 (GRIHYEFDKCIACEVCVRVCPINLPVVDWV) and 95–124 (RNYSIDFGVCIFCGNCVEYCPTNCLSMTEE). Positions 64, 67, 70, 74, 104, 107, 110, and 114 each coordinate [4Fe-4S] cluster.

This sequence belongs to the complex I 23 kDa subunit family. NDH-1 is composed of at least 11 different subunits. [4Fe-4S] cluster is required as a cofactor.

It is found in the cellular thylakoid membrane. The enzyme catalyses a plastoquinone + NADH + (n+1) H(+)(in) = a plastoquinol + NAD(+) + n H(+)(out). It catalyses the reaction a plastoquinone + NADPH + (n+1) H(+)(in) = a plastoquinol + NADP(+) + n H(+)(out). In terms of biological role, NDH-1 shuttles electrons from an unknown electron donor, via FMN and iron-sulfur (Fe-S) centers, to quinones in the respiratory and/or the photosynthetic chain. The immediate electron acceptor for the enzyme in this species is believed to be plastoquinone. Couples the redox reaction to proton translocation, and thus conserves the redox energy in a proton gradient. This Synechococcus sp. (strain CC9902) protein is NAD(P)H-quinone oxidoreductase subunit I.